The following is a 424-amino-acid chain: Lactate racemase (424 aa).

Position 72-75 (72-75 (DHTR)) interacts with Ni(II)-pyridinium-3,5-bisthiocarboxylate mononucleotide. Residues histidine 108 and histidine 174 each act as proton donor/acceptor in the active site. Ni(II)-pyridinium-3,5-bisthiocarboxylate mononucleotide contacts are provided by lysine 184 and histidine 200. Residues glutamine 295 and lysine 298 each contribute to the substrate site.

This sequence belongs to the lactate racemase family. As to quaternary structure, homodimer. Requires Ni(II)-pyridinium-3,5-bisthiocarboxylate mononucleotide as cofactor.

The catalysed reaction is (S)-lactate = (R)-lactate. Activation of the apo-enzyme requires the three accessory proteins LarB, LarE and LarC, that are involved in the biosynthesis of the nickel-pincer cofactor of LarA. Inhibited by sulfite that behaves as a mixed inhibitor. Catalyzes the interconversion between the D- and L-isomers of lactate. May act as a rescue enzyme to ensure D-lactate production in physiological conditions where its production by the D-lactate dehydrogenase LdhD is not sufficient. D-Lactate is absolutely required for growth of L.plantarum and is an essential component of the cell wall peptidoglycan in this species, where it is incorporated as the last residue of the muramoyl-pentadepsipeptide peptidoglycan precursor; its incorporation confers high level of vancomycin resistance. The protein is Lactate racemase of Lactiplantibacillus plantarum (strain ATCC BAA-793 / NCIMB 8826 / WCFS1) (Lactobacillus plantarum).